The sequence spans 108 residues: UPF0102 protein Sputcn32_3693 (108 aa).

The protein belongs to the UPF0102 family.

The polypeptide is UPF0102 protein Sputcn32_3693 (Shewanella putrefaciens (strain CN-32 / ATCC BAA-453)).